The sequence spans 380 residues: Cytochrome b (380 aa).

A run of 4 helical transmembrane segments spans residues 34–54 (FGSL…LLAM), 78–99 (WLIR…YMHI), 114–134 (WNTG…GYVL), and 179–199 (FFAL…IHLT). Heme b-binding residues include His84 and His98. Heme b contacts are provided by His183 and His197. His202 lines the a ubiquinone pocket. 4 helical membrane-spanning segments follow: residues 227-247 (SKDI…ALFS), 289-309 (LGGV…PFLH), 321-341 (LSQM…WIGS), and 348-368 (FIII…ILLP).

Belongs to the cytochrome b family. The cytochrome bc1 complex contains 11 subunits: 3 respiratory subunits (MT-CYB, CYC1 and UQCRFS1), 2 core proteins (UQCRC1 and UQCRC2) and 6 low-molecular weight proteins (UQCRH/QCR6, UQCRB/QCR7, UQCRQ/QCR8, UQCR10/QCR9, UQCR11/QCR10 and a cleavage product of UQCRFS1). This cytochrome bc1 complex then forms a dimer. Requires heme b as cofactor.

The protein localises to the mitochondrion inner membrane. In terms of biological role, component of the ubiquinol-cytochrome c reductase complex (complex III or cytochrome b-c1 complex) that is part of the mitochondrial respiratory chain. The b-c1 complex mediates electron transfer from ubiquinol to cytochrome c. Contributes to the generation of a proton gradient across the mitochondrial membrane that is then used for ATP synthesis. This chain is Cytochrome b (MT-CYB), found in Caracara plancus (Southern caracara).